The sequence spans 393 residues: NAD(P)H-quinone oxidoreductase subunit H 1 (393 aa).

This sequence belongs to the complex I 49 kDa subunit family. In terms of assembly, NDH-1 can be composed of about 15 different subunits; different subcomplexes with different compositions have been identified which probably have different functions.

The protein localises to the cell inner membrane. The enzyme catalyses a plastoquinone + NADH + (n+1) H(+)(in) = a plastoquinol + NAD(+) + n H(+)(out). It carries out the reaction a plastoquinone + NADPH + (n+1) H(+)(in) = a plastoquinol + NADP(+) + n H(+)(out). In terms of biological role, NDH-1 shuttles electrons from an unknown electron donor, via FMN and iron-sulfur (Fe-S) centers, to quinones in the respiratory and/or the photosynthetic chain. The immediate electron acceptor for the enzyme in this species is believed to be plastoquinone. Couples the redox reaction to proton translocation, and thus conserves the redox energy in a proton gradient. Cyanobacterial NDH-1 also plays a role in inorganic carbon-concentration. The protein is NAD(P)H-quinone oxidoreductase subunit H 1 of Gloeobacter violaceus (strain ATCC 29082 / PCC 7421).